A 131-amino-acid chain; its full sequence is MSDIPGDLKFLKSHEWVRIEDNNRAIVGISDHAQNLLGDLVYVELPNIGDHLDAGTTAAVIESVKAASDIYSPVTGKVIEVNTTLSDKPETINEDPYGEGWIMVIEMQAPEEISDLLSPDDYTKVLESDEH.

A Lipoyl-binding domain is found at 24-106 (RAIVGISDHA…YGEGWIMVIE (83 aa)). N6-lipoyllysine is present on Lys65.

It belongs to the GcvH family. In terms of assembly, the glycine cleavage system is composed of four proteins: P, T, L and H. It depends on (R)-lipoate as a cofactor.

Functionally, the glycine cleavage system catalyzes the degradation of glycine. The H protein shuttles the methylamine group of glycine from the P protein to the T protein. The sequence is that of Glycine cleavage system H protein from Xylella fastidiosa (strain 9a5c).